The chain runs to 597 residues: Sodium/mannose cotransporter SLC5A10 (597 aa).

Topologically, residues 1 to 16 (MVADNSTSDPHAPGPQ) are extracellular. N-linked (GlcNAc...) asparagine glycosylation is present at asparagine 5. The helical transmembrane segment at 17-37 (LSVTDIVVITVYFALNVAVGI) threads the bilayer. The Cytoplasmic portion of the chain corresponds to 38 to 73 (WSSCRASRNTVSGYFLAGRDMTWWPIGASLFGSSEG). Serine 49 is subject to Phosphoserine. A helical transmembrane segment spans residues 74–94 (SGLFIGLAGSGAAGGLAVAGF). Topologically, residues 95–100 (DWNATY) are extracellular. The helical transmembrane segment at 101–121 (VLLALAWVFGAIYISSEIVTL) threads the bilayer. Over 122-137 (AEYIQKRFGGQRIRMY) the chain is Cytoplasmic. A helical transmembrane segment spans residues 138–158 (LSVLSLLLSVFTKISLDLYAG). The Extracellular portion of the chain corresponds to 159–171 (ALFVHICLGWNFY). Residues 172–194 (LSTILTLTITALYTITGGLVAVI) traverse the membrane as a helical segment. At 195-200 (YTDALQ) the chain is on the cytoplasmic side. The helical transmembrane segment at 201–219 (TLIMVVGAVILAIKAFHQI) threads the bilayer. At 220–265 (DGYGQMEAAYARAIPSRTVANTTCHLPRADAMHMFRDPYTGDLPWT) the chain is on the extracellular side. Residues 266-286 (GMTFGLTIMATWYWCTDQVIV) form a helical membrane-spanning segment. Residues 287–301 (QRSLSARNLNHAKAG) lie on the Cytoplasmic side of the membrane. Residues 302-322 (SILASYLKMLPMGLMIMPGMI) traverse the membrane as a helical segment. Topologically, residues 323–367 (SRALFPDEVGCVVPSECLRACGAEIGCSNIAYPKLVMELMPVGLR) are extracellular. Residues 368 to 390 (GLMIAVMMPALMSSLSSIFNSSS) form a helical membrane-spanning segment. Residues 391–410 (TLFTMDIWRRLRPCASEREL) are Cytoplasmic-facing. The helical transmembrane segment at 411-431 (LLVGRLVIVVLIGVSVAWIPV) threads the bilayer. Residues 432-444 (LQGSNGGQLFIYM) are Extracellular-facing. A helical membrane pass occupies residues 445–465 (QSVTSSLAPPVTAVFTLGIFW). Residues 466 to 472 (QRANEQG) lie on the Cytoplasmic side of the membrane. Residues 473-493 (AFWGLLAGLAVGATRLVLEFL) form a helical membrane-spanning segment. The Extracellular segment spans residues 494-514 (HPAPPCGAADTRPAVLSQLHY). Residues 515–535 (LHFAVALFVLTGAVAVGGSLL) traverse the membrane as a helical segment. Topologically, residues 536–576 (TPPPRRHQIENLTWWTLTRDLSLGAKAGDGQTPQRYTFWAR) are cytoplasmic. A helical transmembrane segment spans residues 577–597 (VCGFNAILLMCVNIFFYAYFA).

This sequence belongs to the sodium:solute symporter (SSF) (TC 2.A.21) family. As to expression, expressed only in kidney.

Its subcellular location is the apical cell membrane. It carries out the reaction D-mannose(out) + Na(+)(out) = D-mannose(in) + Na(+)(in). The enzyme catalyses D-fructopyranose(out) + Na(+)(out) = D-fructopyranose(in) + Na(+)(in). Its function is as follows. Electrogenic Na+-coupled sugar symporter that actively transports D-mannose or D-fructose at the plasma membrane, with a Na+ to sugar coupling ratio of 1:1. Transporter activity is driven by a transmembrane Na+ electrochemical gradient set by the Na+/K+ pump. Exclusively recognizes sugar substrates having a pyranose ring with an axial hydroxyl group on carbon 2. Has likely evolved to enable renal reabsorption of D-mannose, an important constituent of oligosaccharide chains of glycoproteins. Contributes to dietary D-fructose reabsorption from glomerular filtrate across the brush border of the kidney. The chain is Sodium/mannose cotransporter SLC5A10 (SLC5A10) from Oryctolagus cuniculus (Rabbit).